The following is a 160-amino-acid chain: ATP synthase subunit delta, mitochondrial (160 aa).

Residues 1–22 (MFRQSLRSIARTRTGTIGVRTY) constitute a mitochondrion transit peptide.

As to quaternary structure, F-type ATP synthases have 2 components, the catalytic core F(1) and the membrane-embedded component F(0), linked together by a central stalk and a peripheral stalk. The central stalk, also called rotor shaft, is often seen as part of F(1). The peripheral stalk is seen as part of F(0). F(0) contains the membrane channel next to the rotor. F-type ATP synthases form dimers but each monomer functions independently in ATP generation. The dimer consists of 18 different polypeptides: ATP1 (subunit alpha, part of F(1), 3 molecules per monomer), ATP2 (subunit beta, part of F(1), 3 molecules per monomer), ATP3 (subunit gamma, part of the central stalk), ATP4 (subunit b, part of the peripheral stalk), ATP5/OSCP (subunit 5/OSCP, part of the peripheral stalk), ATP6 (subunit a, part of the peripheral stalk), ATP7 (subunit d, part of the peripheral stalk), ATP8 (subunit 8, part of the peripheral stalk), OLI1 (subunit c, part of the rotor, 10 molecules per monomer), ATP14 (subunit h, part of the peripheral stalk), ATP15 (subunit epsilon, part of the central stalk), ATP16 (subunit delta, part of the central stalk), ATP17 (subunit f, part of the peripheral stalk), ATP18 (subunit i/j, part of the peripheral stalk). Dimer-specific subunits are ATP19 (subunit k, at interface between monomers), ATP20 (subunit g, at interface between monomers), TIM11 (subunit e, at interface between monomers). Also contains subunit L.

The protein localises to the mitochondrion inner membrane. Functionally, mitochondrial membrane ATP synthase (F(1)F(0) ATP synthase or Complex V) produces ATP from ADP in the presence of a proton gradient across the membrane which is generated by electron transport complexes of the respiratory chain. F-type ATP synthases consist of two structural domains, F(1) - containing the extramembraneous catalytic core, and F(0) - containing the membrane proton channel, linked together by a central stalk and a peripheral stalk. During catalysis, ATP synthesis in the catalytic domain of F(1) is coupled via a rotary mechanism of the central stalk subunits to proton translocation. Part of the complex F(1) domain and the central stalk which is part of the complex rotary element. Rotation of the central stalk against the surrounding alpha/ATP1(3)beta/ATP2(3) subunits leads to hydrolysis of ATP in three separate catalytic sites on the beta/ATP2 subunits. The chain is ATP synthase subunit delta, mitochondrial from Pichia angusta (Yeast).